The primary structure comprises 869 residues: Bifunctional uridylyltransferase/uridylyl-removing enzyme (869 aa).

Residues 1 to 332 (MTDAPAERPD…QFDGEATPES (332 aa)) are uridylyltransferase. Residues 333–691 (LGGGFSLRRG…RRAVPDNDAL (359 aa)) form a uridylyl-removing region. The HD domain maps to 450–572 (VDQHTLMVLR…VGTRERLDYL (123 aa)). 2 consecutive ACT domains span residues 692–774 (EVFV…RAVP) and 798–869 (RISL…LDPV).

Belongs to the GlnD family. The cofactor is Mg(2+).

The enzyme catalyses [protein-PII]-L-tyrosine + UTP = [protein-PII]-uridylyl-L-tyrosine + diphosphate. It carries out the reaction [protein-PII]-uridylyl-L-tyrosine + H2O = [protein-PII]-L-tyrosine + UMP + H(+). With respect to regulation, uridylyltransferase (UTase) activity is inhibited by glutamine, while glutamine activates uridylyl-removing (UR) activity. Its function is as follows. Modifies, by uridylylation and deuridylylation, the PII regulatory proteins (GlnB and homologs), in response to the nitrogen status of the cell that GlnD senses through the glutamine level. Under low glutamine levels, catalyzes the conversion of the PII proteins and UTP to PII-UMP and PPi, while under higher glutamine levels, GlnD hydrolyzes PII-UMP to PII and UMP (deuridylylation). Thus, controls uridylylation state and activity of the PII proteins, and plays an important role in the regulation of nitrogen assimilation and metabolism. The polypeptide is Bifunctional uridylyltransferase/uridylyl-removing enzyme (Xanthomonas oryzae pv. oryzae (strain MAFF 311018)).